Here is a 1102-residue protein sequence, read N- to C-terminus: Ubiquitin carboxyl-terminal hydrolase 7 (1102 aa).

The segment covering 1 to 10 has biased composition (low complexity); the sequence is MNHQQQQQQQ. The tract at residues 1-38 is disordered; it reads MNHQQQQQQQKAGEQQLSEPEDMEMEAGDTDDPPRITQ. The tract at residues 1 to 208 is interaction with TSPYL5; the sequence is MNHQQQQQQQ…APHGVAWDSK (208 aa). S18 carries the phosphoserine modification. Over residues 19–31 the composition is skewed to acidic residues; the sequence is EPEDMEMEAGDTD. S49 is modified (phosphoserine). Residues 53-208 form an interaction with p53/TP53, MDM2 and EBNA1 region; sequence NTAEEDMEDD…APHGVAWDSK (156 aa). Positions 68–195 constitute an MATH domain; that stretch reads EATFQFTVER…DDKVTFEVFV (128 aa). The tract at residues 70 to 205 is necessary for nuclear localization; it reads TFQFTVERFS…QADAPHGVAW (136 aa). Residues 214–521 enclose the USP domain; the sequence is VGLKNQGATC…NAYMLVYIRE (308 aa). The Nucleophile role is filled by C223. Residue H464 is the Proton acceptor of the active site. An interaction with ICP0/VMW110 region spans residues 622–801; sequence LWPMQARSNG…HRVDVIFCDK (180 aa). K869 bears the N6-acetyllysine; alternate mark. A Glycyl lysine isopeptide (Lys-Gly) (interchain with G-Cter in SUMO2); alternate cross-link involves residue K869. A Glycyl lysine isopeptide (Lys-Gly) (interchain with G-Cter in ubiquitin); alternate cross-link involves residue K869. K882 participates in a covalent cross-link: Glycyl lysine isopeptide (Lys-Gly) (interchain with G-Cter in SUMO2). At S963 the chain carries Phosphoserine. K1084 and K1096 each carry N6-acetyllysine.

This sequence belongs to the peptidase C19 family. In terms of assembly, monomer. Homodimer. Part of a complex with DAXX, MDM2, RASSF1 and USP7. Part of a complex with DAXX, MDM2 and USP7. Interacts with MDM2; the interaction is independent of p53/TP53. Interacts with DAXX; the interaction is direct and independent of MDM2 and p53/TP53. Component of a complex composed of KMT2E/MLL5 (isoform 3), OGT (isoform 1) and USP7; the complex stabilizes KMT2E/MLL5, preventing KMT2E/MLL5 ubiquitination and proteasomal-mediated degradation. Interacts (via MATH domain) with KMT2E/MLL5 isoform 3. Interacts with OGT isoform 1. Interacts with FOXO4; the interaction is enhanced in presence of hydrogen peroxide and occurs independently of p53/TP53. Interacts with p53/TP53; the interaction is enhanced in response to DNA damage. Interacts with TSPYL5; this impairs interaction with p53/TP53. Interacts with PTEN; the interaction is direct. Interacts with ATXN1 and the strength of interaction is influenced by the length of the poly-Gln region in ATXN1. A weaker interaction seen with mutants having longer poly-Gln regions. Interacts with KIAA1530/UVSSA. Interacts with ABRAXAS2; the interaction is direct. Identified in a complex with TP53/p53 and ABRAXAS2. Interacts with MEX3C and antagonizes its ability to degrade mRNA. Interacts with DNMT1 and UHRF1. Interacts with FOXP3. Interacts (via MATH domain) with RNF220. Associated component of the Polycomb group (PcG) multiprotein PRC1-like complex. Interacts with EPOP. Interacts with OTUD4 and USP9X; the interaction is direct. Interacts with CRY2. Interacts with REST. Interacts with ERCC6. Part of a complex consisting of USP7, MAGEL2 and TRIM27; directly interacts with MAGEL2; directly interacts with TRIM27. (Microbial infection) Isoform 1 and isoform 2 interact with herpesvirus 1 trans-acting transcriptional protein ICP0/VMW110. Binding to ICP0/VMW110 may modulate the substrate specificity or activity of USP7 to stabilize viral proteins. As to quaternary structure, (Microbial infection) Interacts with Epstein-Barr virus EBNA1; the interaction is independent and simultaneous to EBNA1 interaction with USP7 as well as necessary for PML nuclear bodies disruption by EBNA1. EBNA1, USP7 and CSNK2B form a ternary complex. EBNA1 shows a 10-fold higher affinity than p53/TP53 and can compete with it for USP7 binding. In terms of assembly, (Microbial infection) Interacts with human cytomegalovirus proteins UL35 and UL35A; these interactions inhibit the ability of USP7 to form nuclear bodies. (Microbial infection) Interacts with herpes virus 8/HHV-8 proteins vIRF-1 and vIRF-3; these interactions may disrupt TP53 signaling pathway during viral infection by decreasing the availability of USP7 for deubiquitinating and stabilizing TP53. As to quaternary structure, (Microbial infection) Interacts with herpes virus 8/HHV-8 protein vIRF-2; this interaction modulates antiviral signaling via disruption of USP7 interactions with innate immune signaling proteins TRAF3 and TRAF6 thus affecting their ubiquitination. In terms of processing, isoform 1: Phosphorylated. Isoform 1 is phosphorylated at positions Ser-18 and Ser-963. Isoform 2: Not phosphorylated. Post-translationally, isoform 1: Polyneddylated. Isoform 2: Not Polyneddylated. Isoform 1 and isoform 2: Not sumoylated. In terms of processing, isoform 1 and isoform 2: Polyubiquitinated by herpesvirus 1 trans-acting transcriptional protein ICP0/VMW110; leading to its subsequent proteasomal degradation. Isoform 1: Ubiquitinated at Lys-869. As to expression, expressed in neural progenitor cells (at protein level). Widely expressed. Overexpressed in prostate cancer.

It localises to the nucleus. It is found in the cytoplasm. Its subcellular location is the PML body. The protein resides in the chromosome. The enzyme catalyses Thiol-dependent hydrolysis of ester, thioester, amide, peptide and isopeptide bonds formed by the C-terminal Gly of ubiquitin (a 76-residue protein attached to proteins as an intracellular targeting signal).. With respect to regulation, inhibited by N-ethyl-maleimide (NEM) and divalent cations. Tolerates high concentrations of NaCl but is inhibited at concentrations of 195 mM and higher. Its function is as follows. Hydrolase that deubiquitinates target proteins such as ARMC5, FOXO4, DEPTOR, KAT5, p53/TP53, MDM2, ERCC6, DNMT1, UHRF1, PTEN, KMT2E/MLL5 and DAXX. Together with DAXX, prevents MDM2 self-ubiquitination and enhances the E3 ligase activity of MDM2 towards p53/TP53, thereby promoting p53/TP53 ubiquitination and proteasomal degradation. Deubiquitinates p53/TP53, preventing degradation of p53/TP53, and enhances p53/TP53-dependent transcription regulation, cell growth repression and apoptosis. Deubiquitinates p53/TP53 and MDM2 and strongly stabilizes p53/TP53 even in the presence of excess MDM2, and also induces p53/TP53-dependent cell growth repression and apoptosis. Deubiquitination of FOXO4 in presence of hydrogen peroxide is not dependent on p53/TP53 and inhibits FOXO4-induced transcriptional activity. In association with DAXX, is involved in the deubiquitination and translocation of PTEN from the nucleus to the cytoplasm, both processes that are counteracted by PML. Deubiquitinates KMT2E/MLL5 preventing KMT2E/MLL5 proteasomal-mediated degradation. Involved in cell proliferation during early embryonic development. Involved in transcription-coupled nucleotide excision repair (TC-NER) in response to UV damage: recruited to DNA damage sites following interaction with KIAA1530/UVSSA and promotes deubiquitination of ERCC6, preventing UV-induced degradation of ERCC6. Involved in maintenance of DNA methylation via its interaction with UHRF1 and DNMT1: acts by mediating deubiquitination of UHRF1 and DNMT1, preventing their degradation and promoting DNA methylation by DNMT1. Deubiquitinates alkylation repair enzyme ALKBH3. OTUD4 recruits USP7 and USP9X to stabilize ALKBH3, thereby promoting the repair of alkylated DNA lesions. Acts as a chromatin regulator via its association with the Polycomb group (PcG) multiprotein PRC1-like complex; may act by deubiquitinating components of the PRC1-like complex. Able to mediate deubiquitination of histone H2B; it is however unsure whether this activity takes place in vivo. Exhibits a preference towards 'Lys-48'-linked ubiquitin chains. Increases regulatory T-cells (Treg) suppressive capacity by deubiquitinating and stabilizing the transcription factor FOXP3 which is crucial for Treg cell function. Plays a role in the maintenance of the circadian clock periodicity via deubiquitination and stabilization of the CRY1 and CRY2 proteins. Deubiquitinates REST, thereby stabilizing REST and promoting the maintenance of neural progenitor cells. Deubiquitinates SIRT7, inhibiting SIRT7 histone deacetylase activity and regulating gluconeogenesis. Involved in the regulation of WASH-dependent actin polymerization at the surface of endosomes and the regulation of endosomal protein recycling. It maintains optimal WASH complex activity and precise F-actin levels via deubiquitination of TRIM27 and WASHC1. Mediates the deubiquitination of phosphorylated DEPTOR, promoting its stability and leading to decreased mTORC1 signaling. Functionally, (Microbial infection) Contributes to the overall stabilization and trans-activation capability of the herpesvirus 1 trans-acting transcriptional protein ICP0/VMW110 during HSV-1 infection. (Microbial infection) Upon infection with Epstein-Barr virus, the interaction with viral EBNA1 increases the association of USP7 with PML proteins, which is required for the polyubiquitylation and degradation of PML. The sequence is that of Ubiquitin carboxyl-terminal hydrolase 7 from Homo sapiens (Human).